The chain runs to 828 residues: Periplasmic nitrate reductase (828 aa).

Residues 1–31 (MKLSRRSFMKANAVAAAAAAAGLSVPGVARA) constitute a signal peptide (tat-type signal). Residues 39–95 (IKWDKAPCRFCGTGCGVLVGTQQGRIVACQGDPDAPVNRGLNCIKGYFLPKIMYGKD) form the 4Fe-4S Mo/W bis-MGD-type domain. [4Fe-4S] cluster contacts are provided by Cys-46, Cys-49, Cys-53, and Cys-81. Residues Lys-83, Gln-150, Asn-175, Cys-179, 212-219 (WGSNMAEM), 243-247 (STFQH), 262-264 (QSD), Met-372, Gln-376, Asn-482, 508-509 (SD), Lys-531, Asp-558, and 718-727 (TGRVLEHWHT) each bind Mo-bis(molybdopterin guanine dinucleotide). Phe-794 is a substrate binding site. Mo-bis(molybdopterin guanine dinucleotide)-binding residues include Asn-802 and Lys-819.

Belongs to the prokaryotic molybdopterin-containing oxidoreductase family. NasA/NapA/NarB subfamily. In terms of assembly, component of the periplasmic nitrate reductase NapAB complex composed of NapA and NapB. The cofactor is [4Fe-4S] cluster. It depends on Mo-bis(molybdopterin guanine dinucleotide) as a cofactor. Predicted to be exported by the Tat system. The position of the signal peptide cleavage has not been experimentally proven.

The protein resides in the periplasm. The catalysed reaction is 2 Fe(II)-[cytochrome] + nitrate + 2 H(+) = 2 Fe(III)-[cytochrome] + nitrite + H2O. Catalytic subunit of the periplasmic nitrate reductase complex NapAB. Receives electrons from NapB and catalyzes the reduction of nitrate to nitrite. The polypeptide is Periplasmic nitrate reductase (Citrobacter koseri (strain ATCC BAA-895 / CDC 4225-83 / SGSC4696)).